A 242-amino-acid polypeptide reads, in one-letter code: Segregation and condensation protein A (242 aa).

Belongs to the ScpA family. In terms of assembly, component of a cohesin-like complex composed of ScpA, ScpB and the Smc homodimer, in which ScpA and ScpB bind to the head domain of Smc. The presence of the three proteins is required for the association of the complex with DNA.

It localises to the cytoplasm. Its function is as follows. Participates in chromosomal partition during cell division. May act via the formation of a condensin-like complex containing Smc and ScpB that pull DNA away from mid-cell into both cell halves. The sequence is that of Segregation and condensation protein A from Streptococcus pneumoniae serotype 2 (strain D39 / NCTC 7466).